Here is a 478-residue protein sequence, read N- to C-terminus: Chromosomal replication initiator protein DnaA (478 aa).

Residues 1–71 (MNLTHIWKTT…RNALTRVVGY (71 aa)) are domain I, interacts with DnaA modulators. A domain II region spans residues 71–136 (YPVQVQVLIA…LDLASAMRSG (66 aa)). The tract at residues 137-353 (MLNPRYTFAS…GSLNRVAAYA (217 aa)) is domain III, AAA+ region. ATP contacts are provided by G181, G183, K184, and T185. The interval 354–478 (ELNRLPITID…RERIQMMRGL (125 aa)) is domain IV, binds dsDNA.

The protein belongs to the DnaA family. Oligomerizes as a right-handed, spiral filament on DNA at oriC.

It localises to the cytoplasm. Its function is as follows. Plays an essential role in the initiation and regulation of chromosomal replication. ATP-DnaA binds to the origin of replication (oriC) to initiate formation of the DNA replication initiation complex once per cell cycle. Binds the DnaA box (a 9 base pair repeat at the origin) and separates the double-stranded (ds)DNA. Forms a right-handed helical filament on oriC DNA; dsDNA binds to the exterior of the filament while single-stranded (ss)DNA is stabiized in the filament's interior. The ATP-DnaA-oriC complex binds and stabilizes one strand of the AT-rich DNA unwinding element (DUE), permitting loading of DNA polymerase. After initiation quickly degrades to an ADP-DnaA complex that is not apt for DNA replication. Binds acidic phospholipids. This Chloroflexus aggregans (strain MD-66 / DSM 9485) protein is Chromosomal replication initiator protein DnaA.